Reading from the N-terminus, the 223-residue chain is tRNA (guanine-N(7)-)-methyltransferase (223 aa).

The S-adenosyl-L-methionine site is built by Glu-45, Glu-70, and Asp-125. Residue Asp-125 is part of the active site. Residues Lys-129, Asp-161, and 201-204 each bind substrate; that span reads TEYE.

It belongs to the class I-like SAM-binding methyltransferase superfamily. TrmB family.

The enzyme catalyses guanosine(46) in tRNA + S-adenosyl-L-methionine = N(7)-methylguanosine(46) in tRNA + S-adenosyl-L-homocysteine. Its pathway is tRNA modification; N(7)-methylguanine-tRNA biosynthesis. In terms of biological role, catalyzes the formation of N(7)-methylguanine at position 46 (m7G46) in tRNA. The polypeptide is tRNA (guanine-N(7)-)-methyltransferase (Mesoplasma florum (strain ATCC 33453 / NBRC 100688 / NCTC 11704 / L1) (Acholeplasma florum)).